The primary structure comprises 232 residues: Ion-translocating oxidoreductase complex subunit E (232 aa).

6 helical membrane passes run 18–38 (GLVQ…ITNA), 39–59 (LGLG…VSLV), 69–89 (IPVF…LINA), 93–113 (GLYL…IIIG), 127–147 (AAFD…VLGA), and 182–202 (PFLL…LIAL).

It belongs to the NqrDE/RnfAE family. As to quaternary structure, the complex is composed of six subunits: RnfA, RnfB, RnfC, RnfD, RnfE and RnfG.

It is found in the cell inner membrane. Its function is as follows. Part of a membrane-bound complex that couples electron transfer with translocation of ions across the membrane. This chain is Ion-translocating oxidoreductase complex subunit E, found in Shewanella sp. (strain W3-18-1).